Consider the following 545-residue polypeptide: Glucose-6-phosphate isomerase (545 aa).

E351 acts as the Proton donor in catalysis. Residues H382 and K510 contribute to the active site.

The protein belongs to the GPI family.

The protein localises to the cytoplasm. It catalyses the reaction alpha-D-glucose 6-phosphate = beta-D-fructose 6-phosphate. The protein operates within carbohydrate biosynthesis; gluconeogenesis. It participates in carbohydrate degradation; glycolysis; D-glyceraldehyde 3-phosphate and glycerone phosphate from D-glucose: step 2/4. Catalyzes the reversible isomerization of glucose-6-phosphate to fructose-6-phosphate. This chain is Glucose-6-phosphate isomerase, found in Shewanella woodyi (strain ATCC 51908 / MS32).